A 272-amino-acid polypeptide reads, in one-letter code: NADPH-dependent 7-cyano-7-deazaguanine reductase (272 aa).

80 to 82 (VES) is a binding site for substrate. 82 to 83 (SK) provides a ligand contact to NADPH. The Thioimide intermediate role is filled by C178. D185 (proton donor) is an active-site residue. 217–218 (AE) provides a ligand contact to substrate. Residue 246–247 (RG) participates in NADPH binding.

It belongs to the GTP cyclohydrolase I family. QueF type 2 subfamily. In terms of assembly, homodimer.

Its subcellular location is the cytoplasm. The catalysed reaction is 7-aminomethyl-7-carbaguanine + 2 NADP(+) = 7-cyano-7-deazaguanine + 2 NADPH + 3 H(+). It participates in tRNA modification; tRNA-queuosine biosynthesis. Functionally, catalyzes the NADPH-dependent reduction of 7-cyano-7-deazaguanine (preQ0) to 7-aminomethyl-7-deazaguanine (preQ1). This Rickettsia typhi (strain ATCC VR-144 / Wilmington) protein is NADPH-dependent 7-cyano-7-deazaguanine reductase.